Here is a 314-residue protein sequence, read N- to C-terminus: Hydroxyethylthiazole kinase (314 aa).

Residue methionine 70 coordinates substrate. The ATP site is built by arginine 145 and serine 217. Glycine 244 lines the substrate pocket.

Belongs to the Thz kinase family. Requires Mg(2+) as cofactor.

It carries out the reaction 5-(2-hydroxyethyl)-4-methylthiazole + ATP = 4-methyl-5-(2-phosphooxyethyl)-thiazole + ADP + H(+). Its pathway is cofactor biosynthesis; thiamine diphosphate biosynthesis; 4-methyl-5-(2-phosphoethyl)-thiazole from 5-(2-hydroxyethyl)-4-methylthiazole: step 1/1. Its function is as follows. Catalyzes the phosphorylation of the hydroxyl group of 4-methyl-5-beta-hydroxyethylthiazole (THZ). The protein is Hydroxyethylthiazole kinase of Bifidobacterium longum (strain DJO10A).